Consider the following 520-residue polypeptide: 2-isopropylmalate synthase (520 aa).

Residues Val5 to Tyr267 enclose the Pyruvate carboxyltransferase domain. Positions 14, 202, 204, and 238 each coordinate Mn(2+). The interval His392–Val520 is regulatory domain.

Belongs to the alpha-IPM synthase/homocitrate synthase family. LeuA type 1 subfamily. As to quaternary structure, homodimer. Requires Mn(2+) as cofactor.

It localises to the cytoplasm. The enzyme catalyses 3-methyl-2-oxobutanoate + acetyl-CoA + H2O = (2S)-2-isopropylmalate + CoA + H(+). The protein operates within amino-acid biosynthesis; L-leucine biosynthesis; L-leucine from 3-methyl-2-oxobutanoate: step 1/4. Catalyzes the condensation of the acetyl group of acetyl-CoA with 3-methyl-2-oxobutanoate (2-ketoisovalerate) to form 3-carboxy-3-hydroxy-4-methylpentanoate (2-isopropylmalate). The polypeptide is 2-isopropylmalate synthase (Photorhabdus laumondii subsp. laumondii (strain DSM 15139 / CIP 105565 / TT01) (Photorhabdus luminescens subsp. laumondii)).